Reading from the N-terminus, the 159-residue chain is Globin C, coelomic (159 aa).

Glycine 2 carries the N-acetylglycine modification. The Globin domain occupies aspartate 12–glycine 158. Histidine 74 and histidine 105 together coordinate heme b.

This sequence belongs to the globin family. In terms of assembly, monomer.

The polypeptide is Globin C, coelomic (Molpadia arenicola (Sea cucumber)).